The chain runs to 717 residues: Transport/processing ATP-binding protein ComA (717 aa).

The 128-residue stretch at 11–138 folds into the Peptidase C39 domain; the sequence is QVDQMDCGVA…EEWTGVTLFM (128 aa). Cysteine 17 is an active-site residue. Transmembrane regions (helical) follow at residues 18–38, 166–186, 205–225, 237–257, 281–301, 306–326, and 397–417; these read GVAS…LAHL, GLIA…IVGS, LGII…LSYA, LSID…MSFF, STIL…LVLF, NLFF…FAFM, and VAHL…VMDG. The ABC transmembrane type-1 domain occupies 168–450; that stretch reads IANIVLATLL…IINLQTKLQT (283 aa). In terms of domain architecture, ABC transporter spans 484–717; it reads MTFKQVHYKY…GGFYAHLVNS (234 aa). 517-524 is an ATP binding site; that stretch reads GISGSGKT.

This sequence belongs to the ABC transporter superfamily. HlyB family.

The protein localises to the cell membrane. Required for induction of competence. Seems to transport the competence-stimulating peptide (CSP). The sequence is that of Transport/processing ATP-binding protein ComA (comA) from Streptococcus pneumoniae (strain ATCC BAA-255 / R6).